A 200-amino-acid chain; its full sequence is Nucleoside triphosphate pyrophosphatase (200 aa).

Asp79 (proton acceptor) is an active-site residue.

The protein belongs to the Maf family. A divalent metal cation serves as cofactor.

The protein resides in the cytoplasm. It catalyses the reaction a ribonucleoside 5'-triphosphate + H2O = a ribonucleoside 5'-phosphate + diphosphate + H(+). The enzyme catalyses a 2'-deoxyribonucleoside 5'-triphosphate + H2O = a 2'-deoxyribonucleoside 5'-phosphate + diphosphate + H(+). Functionally, nucleoside triphosphate pyrophosphatase. May have a dual role in cell division arrest and in preventing the incorporation of modified nucleotides into cellular nucleic acids. The polypeptide is Nucleoside triphosphate pyrophosphatase (Legionella pneumophila (strain Lens)).